The chain runs to 442 residues: Elongation factor 1-alpha (442 aa).

The 224-residue stretch at 5-228 (KTHINIVVIG…DSVTPPERPV (224 aa)) folds into the tr-type G domain. Residues 14–21 (GHVDSGKS) form a G1 region. A GTP-binding site is contributed by 14–21 (GHVDSGKS). The tract at residues 70-74 (GITID) is G2. The G3 stretch occupies residues 91 to 94 (DAPG). GTP is bound by residues 91–95 (DAPGH) and 153–156 (NKMD). The tract at residues 153–156 (NKMD) is G4. The G5 stretch occupies residues 192–194 (SGF).

This sequence belongs to the TRAFAC class translation factor GTPase superfamily. Classic translation factor GTPase family. EF-Tu/EF-1A subfamily.

It localises to the cytoplasm. In terms of biological role, this protein promotes the GTP-dependent binding of aminoacyl-tRNA to the A-site of ribosomes during protein biosynthesis. The polypeptide is Elongation factor 1-alpha (Entamoeba histolytica (strain ATCC 30459 / HM-1:IMSS / ABRM)).